The chain runs to 103 residues: uncharacterized protein (103 aa).

2 disordered regions span residues 1–20 and 44–71; these read MIELSYAPDVAGRRSNWPKG and LERMASDTHGGGGGRPVTPPPPGMHHLG. The first 34 residues, 1–34, serve as a signal peptide directing secretion; sequence MIELSYAPDVAGRRSNWPKGSGVNTWTAIRWTFA.

This is an uncharacterized protein from Mycobacterium tuberculosis (strain CDC 1551 / Oshkosh).